The primary structure comprises 238 residues: N-(5'-phosphoribosyl)anthranilate isomerase (238 aa).

It belongs to the TrpF family.

It catalyses the reaction N-(5-phospho-beta-D-ribosyl)anthranilate = 1-(2-carboxyphenylamino)-1-deoxy-D-ribulose 5-phosphate. Its pathway is amino-acid biosynthesis; L-tryptophan biosynthesis; L-tryptophan from chorismate: step 3/5. This chain is N-(5'-phosphoribosyl)anthranilate isomerase, found in Methanosarcina acetivorans (strain ATCC 35395 / DSM 2834 / JCM 12185 / C2A).